The primary structure comprises 236 residues: Pyridoxine 5'-phosphate synthase (236 aa).

N6 serves as a coordination point for 3-amino-2-oxopropyl phosphate. Residue 8–9 participates in 1-deoxy-D-xylulose 5-phosphate binding; sequence DH. R17 is a 3-amino-2-oxopropyl phosphate binding site. H42 serves as the catalytic Proton acceptor. 1-deoxy-D-xylulose 5-phosphate contacts are provided by R44 and H49. E69 functions as the Proton acceptor in the catalytic mechanism. A 1-deoxy-D-xylulose 5-phosphate-binding site is contributed by T99. H190 acts as the Proton donor in catalysis. 3-amino-2-oxopropyl phosphate contacts are provided by residues G191 and 212–213; that span reads GH.

Belongs to the PNP synthase family. In terms of assembly, homooctamer; tetramer of dimers.

The protein resides in the cytoplasm. It carries out the reaction 3-amino-2-oxopropyl phosphate + 1-deoxy-D-xylulose 5-phosphate = pyridoxine 5'-phosphate + phosphate + 2 H2O + H(+). It participates in cofactor biosynthesis; pyridoxine 5'-phosphate biosynthesis; pyridoxine 5'-phosphate from D-erythrose 4-phosphate: step 5/5. Catalyzes the complicated ring closure reaction between the two acyclic compounds 1-deoxy-D-xylulose-5-phosphate (DXP) and 3-amino-2-oxopropyl phosphate (1-amino-acetone-3-phosphate or AAP) to form pyridoxine 5'-phosphate (PNP) and inorganic phosphate. The polypeptide is Pyridoxine 5'-phosphate synthase (Chlorobium phaeobacteroides (strain DSM 266 / SMG 266 / 2430)).